A 299-amino-acid chain; its full sequence is dTDP-4-dehydrorhamnose reductase (299 aa).

NADH-binding positions include 10–12, D30, 39–40, and 63–65; these read GQV, DF, and AHT. Position 11–12 (11–12) interacts with NADPH; it reads QV. NADPH contacts are provided by residues 39-40, 63-65, and Y102; these read DF and AHT. DTDP-beta-L-rhamnose is bound at residue 104–105; it reads TD. The NADH site is built by Y128 and K132. Residues Y128 and K132 each coordinate NADPH. Catalysis depends on Y128, which acts as the Proton donor/acceptor. W153 provides a ligand contact to dTDP-beta-L-rhamnose.

This sequence belongs to the dTDP-4-dehydrorhamnose reductase family. Homodimer. Mg(2+) serves as cofactor.

The catalysed reaction is dTDP-beta-L-rhamnose + NADP(+) = dTDP-4-dehydro-beta-L-rhamnose + NADPH + H(+). Its pathway is carbohydrate biosynthesis; dTDP-L-rhamnose biosynthesis. The protein operates within bacterial outer membrane biogenesis; LPS O-antigen biosynthesis. Its function is as follows. Involved in the biosynthesis of the dTDP-L-rhamnose which is an important component of lipopolysaccharide (LPS). Catalyzes the reduction of dTDP-6-deoxy-L-lyxo-4-hexulose to yield dTDP-L-rhamnose. RmlD uses NADH and NADPH nearly equally well. This is dTDP-4-dehydrorhamnose reductase (rfbD) from Salmonella typhimurium (strain LT2 / SGSC1412 / ATCC 700720).